The following is a 310-amino-acid chain: Isoaspartyl peptidase/L-asparaginase (310 aa).

T167 serves as the catalytic Nucleophile. Residues 195-198 and 218-221 contribute to the substrate site; these read RVGD and TGHG.

It belongs to the Ntn-hydrolase family. Heterodimer of an alpha and beta chain produced by autocleavage. Post-translationally, cleaved into an alpha and beta chain by autocatalysis; this activates the enzyme. The N-terminal residue of the beta subunit is responsible for the nucleophile hydrolase activity.

It is found in the cytoplasm. The enzyme catalyses L-asparagine + H2O = L-aspartate + NH4(+). It catalyses the reaction Cleavage of a beta-linked Asp residue from the N-terminus of a polypeptide.. Functionally, has both L-asparaginase and beta-aspartyl peptidase activity. Does not have aspartylglucosaminidase activity and is inactive toward GlcNAc-L-Asn. Likewise, has no activity toward glutamine. This chain is Isoaspartyl peptidase/L-asparaginase (asrgl1), found in Danio rerio (Zebrafish).